Consider the following 466-residue polypeptide: Phytase A (466 aa).

The first 19 residues, M1–G19, serve as a signal peptide directing secretion. The N-linked (GlcNAc...) asparagine glycan is linked to N27. Residues C31 and C40 are joined by a disulfide bond. 1D-myo-inositol hexakisphosphate is bound by residues Y51, R81, H82, R85, and T88. Intrachain disulfides connect C71–C414, C215–C465, C264–C282, and C436–C444. H82 acts as the Nucleophile in catalysis. N-linked (GlcNAc...) asparagine glycosylation is found at N105 and N120. A 1D-myo-inositol hexakisphosphate-binding site is contributed by R165. N-linked (GlcNAc...) asparagine glycans are attached at residues N207 and N230. K301 is a binding site for 1D-myo-inositol hexakisphosphate. 2 N-linked (GlcNAc...) asparagine glycosylation sites follow: N339 and N352. 2 residues coordinate 1D-myo-inositol hexakisphosphate: H361 and D362. N-linked (GlcNAc...) asparagine glycosylation occurs at N376.

This sequence belongs to the histidine acid phosphatase family. In terms of assembly, monomer.

Its subcellular location is the secreted. It catalyses the reaction 1D-myo-inositol hexakisphosphate + H2O = 1D-myo-inositol 1,2,4,5,6-pentakisphosphate + phosphate. The catalysed reaction is 1D-myo-inositol 1,2,4,5,6-pentakisphosphate + H2O = 1D-myo-inositol 1,2,5,6-tetrakisphosphate + phosphate. It carries out the reaction 1D-myo-inositol 1,2,5,6-tetrakisphosphate + H2O = 1D-myo-inositol 1,2,6-trisphosphate + phosphate. The enzyme catalyses 1D-myo-inositol 1,2,6-trisphosphate + H2O = 1D-myo-inositol 1,2-bisphosphate + phosphate. It catalyses the reaction 1D-myo-inositol 1,2-bisphosphate + H2O = 1D-myo-inositol 2-phosphate + phosphate. In terms of biological role, catalyzes the phosphate monoester hydrolysis of phytic acid (myo-inositol hexakisphosphate), which results in the stepwise formation of myo-inositol pentakis-, tetrakis-, tris-, bis-, and monophosphates, as well as the liberation of inorganic phosphate. Myo-inositol 2-monophosphate is the end product. Has a broad substrate specificity and is also able to dephosphorylate other classic acid phosphatase substrates such as p-nitrophenyl phosphate, phenyl phosphate, fructose 1,6-bisphosphate, glucose 6-phosphate, 3-phosphoglycerate, as well as ADP and ATP. This is Phytase A from Aspergillus terreus.